The chain runs to 475 residues: Glycogen synthase (475 aa).

Lys15 is a binding site for ADP-alpha-D-glucose.

This sequence belongs to the glycosyltransferase 1 family. Bacterial/plant glycogen synthase subfamily.

It carries out the reaction [(1-&gt;4)-alpha-D-glucosyl](n) + ADP-alpha-D-glucose = [(1-&gt;4)-alpha-D-glucosyl](n+1) + ADP + H(+). It functions in the pathway glycan biosynthesis; glycogen biosynthesis. Synthesizes alpha-1,4-glucan chains using ADP-glucose. This chain is Glycogen synthase, found in Anaeromyxobacter sp. (strain Fw109-5).